A 393-amino-acid polypeptide reads, in one-letter code: NAD(P)H-quinone oxidoreductase subunit H, chloroplastic (393 aa).

This sequence belongs to the complex I 49 kDa subunit family. As to quaternary structure, NDH is composed of at least 16 different subunits, 5 of which are encoded in the nucleus.

The protein resides in the plastid. It is found in the chloroplast thylakoid membrane. It catalyses the reaction a plastoquinone + NADH + (n+1) H(+)(in) = a plastoquinol + NAD(+) + n H(+)(out). The catalysed reaction is a plastoquinone + NADPH + (n+1) H(+)(in) = a plastoquinol + NADP(+) + n H(+)(out). In terms of biological role, NDH shuttles electrons from NAD(P)H:plastoquinone, via FMN and iron-sulfur (Fe-S) centers, to quinones in the photosynthetic chain and possibly in a chloroplast respiratory chain. The immediate electron acceptor for the enzyme in this species is believed to be plastoquinone. Couples the redox reaction to proton translocation, and thus conserves the redox energy in a proton gradient. The sequence is that of NAD(P)H-quinone oxidoreductase subunit H, chloroplastic from Lolium perenne (Perennial ryegrass).